A 117-amino-acid polypeptide reads, in one-letter code: Large ribosomal subunit protein bL20 (117 aa).

It belongs to the bacterial ribosomal protein bL20 family.

In terms of biological role, binds directly to 23S ribosomal RNA and is necessary for the in vitro assembly process of the 50S ribosomal subunit. It is not involved in the protein synthesizing functions of that subunit. The polypeptide is Large ribosomal subunit protein bL20 (Brachyspira hyodysenteriae (strain ATCC 49526 / WA1)).